Here is a 499-residue protein sequence, read N- to C-terminus: Glutelin type-B 1 (499 aa).

The first 24 residues, 1–24, serve as a signal peptide directing secretion; it reads MASSVFSRFSIYFCVLLLCHGSMA. 2 cysteine pairs are disulfide-bonded: cysteine 45–cysteine 78 and cysteine 121–cysteine 309. 2 consecutive Cupin type-1 domains span residues 50–247 and 315–464; these read LQAF…VAAK and VNIE…EQAR. A disordered region spans residues 467–499; the sequence is KNNRGEEHGAFTPRFQQQYYPGLSNESESETSE.

This sequence belongs to the 11S seed storage protein (globulins) family. Hexamer; each subunit is composed of an acidic and a basic chain derived from a single precursor and linked by a disulfide bond.

In terms of biological role, seed storage protein. In Oryza sativa subsp. japonica (Rice), this protein is Glutelin type-B 1 (GluB1-A).